The sequence spans 277 residues: 4-hydroxy-3-methylbut-2-enyl diphosphate reductase (277 aa).

Cys-12 is a [4Fe-4S] cluster binding site. (2E)-4-hydroxy-3-methylbut-2-enyl diphosphate-binding residues include His-36 and His-70. Positions 36 and 70 each coordinate dimethylallyl diphosphate. Residues His-36 and His-70 each contribute to the isopentenyl diphosphate site. Cys-92 lines the [4Fe-4S] cluster pocket. Position 120 (His-120) interacts with (2E)-4-hydroxy-3-methylbut-2-enyl diphosphate. Residue His-120 participates in dimethylallyl diphosphate binding. Residue His-120 coordinates isopentenyl diphosphate. Glu-122 serves as the catalytic Proton donor. Thr-158 serves as a coordination point for (2E)-4-hydroxy-3-methylbut-2-enyl diphosphate. Position 186 (Cys-186) interacts with [4Fe-4S] cluster. The (2E)-4-hydroxy-3-methylbut-2-enyl diphosphate site is built by Ser-214, Asn-216, and Ser-258. Dimethylallyl diphosphate contacts are provided by Ser-214, Asn-216, and Ser-258. The isopentenyl diphosphate site is built by Ser-214, Asn-216, and Ser-258.

Belongs to the IspH family. Requires [4Fe-4S] cluster as cofactor.

The catalysed reaction is isopentenyl diphosphate + 2 oxidized [2Fe-2S]-[ferredoxin] + H2O = (2E)-4-hydroxy-3-methylbut-2-enyl diphosphate + 2 reduced [2Fe-2S]-[ferredoxin] + 2 H(+). The enzyme catalyses dimethylallyl diphosphate + 2 oxidized [2Fe-2S]-[ferredoxin] + H2O = (2E)-4-hydroxy-3-methylbut-2-enyl diphosphate + 2 reduced [2Fe-2S]-[ferredoxin] + 2 H(+). It participates in isoprenoid biosynthesis; dimethylallyl diphosphate biosynthesis; dimethylallyl diphosphate from (2E)-4-hydroxy-3-methylbutenyl diphosphate: step 1/1. It functions in the pathway isoprenoid biosynthesis; isopentenyl diphosphate biosynthesis via DXP pathway; isopentenyl diphosphate from 1-deoxy-D-xylulose 5-phosphate: step 6/6. Functionally, catalyzes the conversion of 1-hydroxy-2-methyl-2-(E)-butenyl 4-diphosphate (HMBPP) into a mixture of isopentenyl diphosphate (IPP) and dimethylallyl diphosphate (DMAPP). Acts in the terminal step of the DOXP/MEP pathway for isoprenoid precursor biosynthesis. The sequence is that of 4-hydroxy-3-methylbut-2-enyl diphosphate reductase from Campylobacter jejuni subsp. jejuni serotype O:23/36 (strain 81-176).